A 446-amino-acid chain; its full sequence is tRNA-2-methylthio-N(6)-dimethylallyladenosine synthase (446 aa).

The 117-residue stretch at Lys-5–Arg-121 folds into the MTTase N-terminal domain. [4Fe-4S] cluster-binding residues include Cys-14, Cys-50, Cys-84, Cys-159, Cys-163, and Cys-166. In terms of domain architecture, Radical SAM core spans Gly-145–Glu-375. The 63-residue stretch at Ile-378–Thr-440 folds into the TRAM domain.

The protein belongs to the methylthiotransferase family. MiaB subfamily. In terms of assembly, monomer. It depends on [4Fe-4S] cluster as a cofactor.

It localises to the cytoplasm. The enzyme catalyses N(6)-dimethylallyladenosine(37) in tRNA + (sulfur carrier)-SH + AH2 + 2 S-adenosyl-L-methionine = 2-methylsulfanyl-N(6)-dimethylallyladenosine(37) in tRNA + (sulfur carrier)-H + 5'-deoxyadenosine + L-methionine + A + S-adenosyl-L-homocysteine + 2 H(+). In terms of biological role, catalyzes the methylthiolation of N6-(dimethylallyl)adenosine (i(6)A), leading to the formation of 2-methylthio-N6-(dimethylallyl)adenosine (ms(2)i(6)A) at position 37 in tRNAs that read codons beginning with uridine. This chain is tRNA-2-methylthio-N(6)-dimethylallyladenosine synthase, found in Geobacter sulfurreducens (strain ATCC 51573 / DSM 12127 / PCA).